A 1358-amino-acid chain; its full sequence is DNA-directed RNA polymerase subunit beta (1358 aa).

It belongs to the RNA polymerase beta chain family. As to quaternary structure, the RNAP catalytic core consists of 2 alpha, 1 beta, 1 beta' and 1 omega subunit. When a sigma factor is associated with the core the holoenzyme is formed, which can initiate transcription.

The enzyme catalyses RNA(n) + a ribonucleoside 5'-triphosphate = RNA(n+1) + diphosphate. DNA-dependent RNA polymerase catalyzes the transcription of DNA into RNA using the four ribonucleoside triphosphates as substrates. The protein is DNA-directed RNA polymerase subunit beta of Francisella tularensis subsp. holarctica (strain OSU18).